Reading from the N-terminus, the 84-residue chain is uncharacterized protein (84 aa).

A helical transmembrane segment spans residues 25–45 (ILMTVAGFIIAFAILVFQISF).

It localises to the membrane. This is an uncharacterized protein from Bacillus anthracis.